The following is a 215-amino-acid chain: Cytochrome b6 (215 aa).

Residues 32 to 52 (IFYCLGGITLTCFLVQVATGF) traverse the membrane as a helical segment. Cys-35 lines the heme c pocket. 2 residues coordinate heme b: His-86 and His-100. 3 helical membrane passes run 90–110 (ASMM…TGGF), 116–136 (LTWV…VTGY), and 186–206 (LHTF…FLMI). His-187 and His-202 together coordinate heme b.

The protein belongs to the cytochrome b family. PetB subfamily. The 4 large subunits of the cytochrome b6-f complex are cytochrome b6, subunit IV (17 kDa polypeptide, PetD), cytochrome f and the Rieske protein, while the 4 small subunits are PetG, PetL, PetM and PetN. The complex functions as a dimer. Requires heme b as cofactor. Heme c is required as a cofactor.

Its subcellular location is the plastid. The protein resides in the chloroplast thylakoid membrane. Component of the cytochrome b6-f complex, which mediates electron transfer between photosystem II (PSII) and photosystem I (PSI), cyclic electron flow around PSI, and state transitions. The polypeptide is Cytochrome b6 (Nicotiana tabacum (Common tobacco)).